A 240-amino-acid polypeptide reads, in one-letter code: Expansin-A20 (240 aa).

The N-terminal stretch at 1 to 21 (MGNILLQLLAVVALCIAPARS) is a signal peptide. The region spanning 41–145 (GGACGYGNLY…QQVKCWRYGG (105 aa)) is the Expansin-like EG45 domain. 2 N-linked (GlcNAc...) asparagine glycosylation sites follow: Asn-107 and Asn-207. An Expansin-like CBD domain is found at 155–234 (YFELVLVTNM…GWSFGQTFST (80 aa)).

The protein belongs to the expansin family. Expansin A subfamily.

It localises to the secreted. The protein localises to the cell wall. The protein resides in the membrane. In terms of biological role, may cause loosening and extension of plant cell walls by disrupting non-covalent bonding between cellulose microfibrils and matrix glucans. No enzymatic activity has been found. May be required for rapid internodal elongation in deepwater rice during submergence. The sequence is that of Expansin-A20 (EXPA20) from Oryza sativa subsp. japonica (Rice).